The sequence spans 862 residues: Alanine--tRNA ligase (862 aa).

Residues His-552, His-556, Cys-653, and His-657 each coordinate Zn(2+).

This sequence belongs to the class-II aminoacyl-tRNA synthetase family. Zn(2+) is required as a cofactor.

It is found in the cytoplasm. It catalyses the reaction tRNA(Ala) + L-alanine + ATP = L-alanyl-tRNA(Ala) + AMP + diphosphate. Catalyzes the attachment of alanine to tRNA(Ala) in a two-step reaction: alanine is first activated by ATP to form Ala-AMP and then transferred to the acceptor end of tRNA(Ala). Also edits incorrectly charged Ser-tRNA(Ala) and Gly-tRNA(Ala) via its editing domain. This chain is Alanine--tRNA ligase, found in Nitrosospira multiformis (strain ATCC 25196 / NCIMB 11849 / C 71).